A 798-amino-acid chain; its full sequence is Cold shock domain-containing protein E1 (798 aa).

The CSD 1 domain maps to 26–87 (ETGVIEKLLT…RTGKPIAIKL (62 aa)). Residue lysine 81 is modified to N6-acetyllysine. Lysine 91 is covalently cross-linked (Glycyl lysine isopeptide (Lys-Gly) (interchain with G-Cter in SUMO2)). Residue serine 123 is modified to Phosphoserine. The region spanning 136–179 (VFYLTYTSEDVEGNVQLETGDKINFVIDNNKHTGAVSARNIMLL) is the CSD 2; truncated domain. Positions 186–245 (CQGVVCAMKEAFGFIERGDVVKEIFFHYSEFKGDLETLQPGDDVEFTIKDRNGKEVATDV) constitute a CSD 3 domain. Position 276 is a phosphoserine (serine 276). The CSD 4; truncated domain occupies 297-337 (LPFGDKDTKSKVTLLEGDHVRFNISTDRRDKLERATNIEVL). 2 consecutive CSD domains span residues 349–410 (EMGV…AIRI) and 447–507 (NKGK…ATCV). Serine 514 is subject to Phosphoserine. One can recognise a CSD 7 domain in the interval 519 to 579 (LLGYVATLKD…KGNKVSAEKV (61 aa)). Serine 584 is modified (phosphoserine). CSD domains lie at 610–670 (PTQI…AYNI) and 674–735 (RRAT…ACNV). The SUZ-C domain maps to 748–789 (PRPDRLVNRLKNITLDDASAPRLMVLRQPRGPDNSMGFGAER). Threonine 761 is modified (phosphothreonine).

The protein belongs to the UNR family. Component of a multi subunit autoregulatory ribonucleoprotein complex (ARC), at least composed of IGF2BP1, PABPC1 and CSDE1. Interacts with STRAP. Part of a complex associated with the FOS mCRD domain and consisting of PABPC1, PAIP1, HNRPD and SYNCRIP. The interaction with PABPC1 is direct and RNA-independent. Interacts with EIF4ENIF1/4E-T.

It localises to the cytoplasm. The protein resides in the stress granule. The protein localises to the P-body. In terms of biological role, RNA-binding protein involved in translationally coupled mRNA turnover. Implicated with other RNA-binding proteins in the cytoplasmic deadenylation/translational and decay interplay of the FOS mRNA mediated by the major coding-region determinant of instability (mCRD) domain. Required for efficient formation of stress granules. This is Cold shock domain-containing protein E1 from Mus musculus (Mouse).